A 204-amino-acid chain; its full sequence is Uridylate kinase (204 aa).

26 to 31 is a binding site for ATP; it reads GAGKGT. Positions 46-76 are NMP; the sequence is SAGDLLRAEQGRAGSQYGELIKNCIKEGQIV. Residues Arg-52, 74–76, 104–107, and Gln-111 contribute to the a ribonucleoside 5'-phosphate site; these read QIV and GFPR. Positions 141–151 are LID; it reads ERGKTSGRSDD. ATP is bound at residue Arg-142. 2 residues coordinate a ribonucleoside 5'-phosphate: Arg-148 and Arg-159. Arg-187 is an ATP binding site.

This sequence belongs to the adenylate kinase family. UMP-CMP kinase subfamily. Monomer. Mg(2+) is required as a cofactor.

Its subcellular location is the cytoplasm. It localises to the nucleus. The catalysed reaction is UMP + ATP = UDP + ADP. Its function is as follows. Catalyzes the phosphorylation of pyrimidine nucleoside monophosphates at the expense of ATP. Plays an important role in de novo pyrimidine nucleotide biosynthesis. Has preference for UMP and dUMP as phosphate acceptors, but can also use CMP, dCMP, AMP, GMP, dGMP and dTMP. ATP and dATP are the best phosphate donors, but can also use GTP, dGTP, dCTP, and dTTP to some degree. The polypeptide is Uridylate kinase (Saccharomyces cerevisiae (strain ATCC 204508 / S288c) (Baker's yeast)).